The primary structure comprises 165 residues: Protein SprT (165 aa).

In terms of domain architecture, SprT-like spans Glu-10 to Phe-158. A Zn(2+)-binding site is contributed by His-69. Glu-70 is a catalytic residue. His-73 contacts Zn(2+).

The protein belongs to the SprT family. Requires Zn(2+) as cofactor.

It localises to the cytoplasm. The protein is Protein SprT of Pseudomonas aeruginosa (strain LESB58).